The sequence spans 206 residues: Superoxide dismutase [Mn] (206 aa).

Residues H27, H82, D168, and H172 each contribute to the Mn(2+) site.

This sequence belongs to the iron/manganese superoxide dismutase family. As to quaternary structure, homodimer. Mn(2+) is required as a cofactor.

It catalyses the reaction 2 superoxide + 2 H(+) = H2O2 + O2. In terms of biological role, destroys superoxide anion radicals which are normally produced within the cells and which are toxic to biological systems. This Escherichia coli O157:H7 protein is Superoxide dismutase [Mn] (sodA).